The primary structure comprises 861 residues: DNA mismatch repair protein MutS (861 aa).

G616–S623 contacts ATP.

It belongs to the DNA mismatch repair MutS family.

This protein is involved in the repair of mismatches in DNA. It is possible that it carries out the mismatch recognition step. This protein has a weak ATPase activity. This is DNA mismatch repair protein MutS from Haemophilus influenzae (strain PittEE).